The chain runs to 132 residues: Histone H2A.2 (132 aa).

N-acetylserine is present on S2. K5 and K8 each carry N6-acetyllysine. N6-succinyllysine occurs at positions 14 and 22. Q106 bears the N5-methylglutamine mark. At K120 the chain carries N6-malonyllysine. Residue K127 forms a Glycyl lysine isopeptide (Lys-Gly) (interchain with G-Cter in SUMO) linkage. S129 carries the phosphoserine modification. The [ST]-Q motif signature appears at 129-130; it reads SQ.

Belongs to the histone H2A family. As to quaternary structure, the nucleosome is a histone octamer containing two molecules each of H2A, H2B, H3 and H4 assembled in one H3-H4 heterotetramer and two H2A-H2B heterodimers. The octamer wraps approximately 147 bp of DNA. Interacts with NAP1. Post-translationally, phosphorylated to form H2AS128ph (gamma-H2A) in response to DNA double-strand breaks (DSBs) generated by exogenous genotoxic agents and by stalled replication forks. Phosphorylation is dependent on the DNA damage checkpoint kinases MEC1/ATR and TEL1/ATM, spreads on either side of a detected DSB site and may mark the surrounding chromatin for recruitment of proteins required for DNA damage signaling and repair. Gamma-H2A interacts with ARP4, a shared component of the NuA4 histone acetyltransferase complex and the INO80 and SWR1 chromatin remodeling complexes, and serves to recruit first NuA4, mediating histone H4 acetylation, and subsequently the INO80/SWR1 complexes, facilitating DNA resection, to DSB sites. Gamma-H2A is required for sequestering cohesin around the break site, which is important for efficient post-replicative double-strand break repair by homologous recombination, holding the damaged chromatid close to its undamaged sister template. Gamma-H2A is removed from the DNA prior to the strand invasion-primer extension step of the repair process and subsequently dephosphorylated by PPH3, a component of the histone H2A phosphatase complex (HTP-C). Dephosphorylation is necessary for efficient recovery from the DNA damage checkpoint. N-acetylated by NAT4. In terms of processing, acetylated by ESA1, a component of the NuA4 histone acetyltransferase (HAT) complex, to form H2AK4ac and H2AK7ac. Post-translationally, glutamine methylation at Gln-106 (H2AQ105me) by NOP1 is specifically dedicated to polymerase I. It is present at 35S ribosomal DNA locus and impairs binding of the FACT complex. Sumoylated to from H2AK126su. May lead to transcriptional repression.

The protein localises to the nucleus. The protein resides in the chromosome. Core component of nucleosome which plays a central role in DNA double strand break (DSB) repair. Nucleosomes wrap and compact DNA into chromatin, limiting DNA accessibility to the cellular machineries which require DNA as a template. Histones thereby play a central role in transcription regulation, DNA repair, DNA replication and chromosomal stability. DNA accessibility is regulated via a complex set of post-translational modifications of histones, also called histone code, and nucleosome remodeling. The polypeptide is Histone H2A.2 (HTA2) (Saccharomyces cerevisiae (strain ATCC 204508 / S288c) (Baker's yeast)).